The sequence spans 37 residues: Large ribosomal subunit protein bL36 (37 aa).

It belongs to the bacterial ribosomal protein bL36 family.

In Heliobacterium modesticaldum (strain ATCC 51547 / Ice1), this protein is Large ribosomal subunit protein bL36.